The primary structure comprises 510 residues: NAD(P)H-quinone oxidoreductase subunit 2 A, chloroplastic (510 aa).

A run of 13 helical transmembrane segments spans residues 31 to 51 (FIFP…IDLT), 57 to 77 (TPWL…ALLF), 99 to 119 (IFQF…VEYI), 124 to 144 (MAIT…MFLC), 149 to 169 (LITI…LSGY), 183 to 203 (YLLM…WLYG), 229 to 249 (ISIA…PAPF), 295 to 315 (WHLL…LIAI), 323 to 343 (MLAY…IVGD), 354 to 374 (YMLF…LFGL), 395 to 415 (ALSS…AGFF), 418 to 438 (LYLF…IGLL), and 484 to 504 (MIVC…IIAI).

Belongs to the complex I subunit 2 family. In terms of assembly, NDH is composed of at least 16 different subunits, 5 of which are encoded in the nucleus.

Its subcellular location is the plastid. The protein localises to the chloroplast thylakoid membrane. The catalysed reaction is a plastoquinone + NADH + (n+1) H(+)(in) = a plastoquinol + NAD(+) + n H(+)(out). It catalyses the reaction a plastoquinone + NADPH + (n+1) H(+)(in) = a plastoquinol + NADP(+) + n H(+)(out). In terms of biological role, NDH shuttles electrons from NAD(P)H:plastoquinone, via FMN and iron-sulfur (Fe-S) centers, to quinones in the photosynthetic chain and possibly in a chloroplast respiratory chain. The immediate electron acceptor for the enzyme in this species is believed to be plastoquinone. Couples the redox reaction to proton translocation, and thus conserves the redox energy in a proton gradient. This Nymphaea alba (White water-lily) protein is NAD(P)H-quinone oxidoreductase subunit 2 A, chloroplastic.